The primary structure comprises 370 residues: MTAQSRDPAWTDASPTFQPTMRHDWSLEEIEALFALPFNDLLFRAQQVHRAHFDPNAVQVSTLLSIKTGACPEDCKYCPQSGHYNTGLGKEKLLEIEKVVEQARAAKAAGASRFCMGAAWRSPREKDLRVVTEMVGRVKALGLETCMTLGMVDVDQARRLAEAGLDYYNHNLDTSPDYYGEIITTRTYADRLETLANVREAGMKVCSGGILGMGEAPRDRAALLQQLVRLDPHPESVPINMLVKVPGTPMENVEDMDPLTFIRAIAVARILMPKSHVRLSAGREQMDESTQALAFLAGANSIFYGDTLLTTGNPQVERDRALFDKLGLHPEPSDPHADDAHRDDEQAEIALAHAIQRQRDDALFYDATRG.

One can recognise a Radical SAM core domain in the interval 56 to 283; sequence NAVQVSTLLS…KSHVRLSAGR (228 aa). [4Fe-4S] cluster-binding residues include Cys71, Cys75, and Cys78. Positions 115, 146, 206, and 278 each coordinate [2Fe-2S] cluster. Basic and acidic residues predominate over residues 327–344; the sequence is GLHPEPSDPHADDAHRDD. The segment at 327 to 346 is disordered; the sequence is GLHPEPSDPHADDAHRDDEQ.

The protein belongs to the radical SAM superfamily. Biotin synthase family. Homodimer. The cofactor is [4Fe-4S] cluster. [2Fe-2S] cluster serves as cofactor.

The catalysed reaction is (4R,5S)-dethiobiotin + (sulfur carrier)-SH + 2 reduced [2Fe-2S]-[ferredoxin] + 2 S-adenosyl-L-methionine = (sulfur carrier)-H + biotin + 2 5'-deoxyadenosine + 2 L-methionine + 2 oxidized [2Fe-2S]-[ferredoxin]. It functions in the pathway cofactor biosynthesis; biotin biosynthesis; biotin from 7,8-diaminononanoate: step 2/2. Its function is as follows. Catalyzes the conversion of dethiobiotin (DTB) to biotin by the insertion of a sulfur atom into dethiobiotin via a radical-based mechanism. This is Biotin synthase from Chromohalobacter salexigens (strain ATCC BAA-138 / DSM 3043 / CIP 106854 / NCIMB 13768 / 1H11).